Consider the following 197-residue polypeptide: NADH-quinone oxidoreductase subunit C (197 aa).

Belongs to the complex I 30 kDa subunit family. NDH-1 is composed of 14 different subunits. Subunits NuoB, C, D, E, F, and G constitute the peripheral sector of the complex.

The protein resides in the cell inner membrane. The catalysed reaction is a quinone + NADH + 5 H(+)(in) = a quinol + NAD(+) + 4 H(+)(out). Functionally, NDH-1 shuttles electrons from NADH, via FMN and iron-sulfur (Fe-S) centers, to quinones in the respiratory chain. The immediate electron acceptor for the enzyme in this species is believed to be ubiquinone. Couples the redox reaction to proton translocation (for every two electrons transferred, four hydrogen ions are translocated across the cytoplasmic membrane), and thus conserves the redox energy in a proton gradient. This chain is NADH-quinone oxidoreductase subunit C, found in Neisseria meningitidis serogroup C (strain 053442).